The following is a 193-amino-acid chain: dCTP deaminase, dUMP-forming (193 aa).

Residues 101–106 (KSSLGR), D119, 127–129 (TLE), Q148, Y162, and Q174 each bind dCTP. E129 functions as the Proton donor/acceptor in the catalytic mechanism. The disordered stretch occupies residues 160–193 (TPYGSGSLGSKYQGQRGPTPSKGYLNFSSEQDSD). The span at 167 to 177 (LGSKYQGQRGP) shows a compositional bias: polar residues.

It belongs to the dCTP deaminase family. Homotrimer.

The catalysed reaction is dCTP + 2 H2O = dUMP + NH4(+) + diphosphate. Its pathway is pyrimidine metabolism; dUMP biosynthesis; dUMP from dCTP: step 1/1. Bifunctional enzyme that catalyzes both the deamination of dCTP to dUTP and the hydrolysis of dUTP to dUMP without releasing the toxic dUTP intermediate. In Corynebacterium efficiens (strain DSM 44549 / YS-314 / AJ 12310 / JCM 11189 / NBRC 100395), this protein is dCTP deaminase, dUMP-forming.